The sequence spans 600 residues: Aspartate--tRNA(Asp/Asn) ligase (600 aa).

E187 lines the L-aspartate pocket. The tract at residues 211–214 (QIFK) is aspartate. The L-aspartate site is built by R233 and H463. 233–235 (RDE) is a binding site for ATP. E497 is an ATP binding site. Position 504 (R504) interacts with L-aspartate. 549 to 552 (GVDR) contacts ATP.

Belongs to the class-II aminoacyl-tRNA synthetase family. Type 1 subfamily. In terms of assembly, homodimer.

It is found in the cytoplasm. It carries out the reaction tRNA(Asx) + L-aspartate + ATP = L-aspartyl-tRNA(Asx) + AMP + diphosphate. Aspartyl-tRNA synthetase with relaxed tRNA specificity since it is able to aspartylate not only its cognate tRNA(Asp) but also tRNA(Asn). Reaction proceeds in two steps: L-aspartate is first activated by ATP to form Asp-AMP and then transferred to the acceptor end of tRNA(Asp/Asn). This chain is Aspartate--tRNA(Asp/Asn) ligase, found in Wolbachia pipientis wMel.